Here is a 253-residue protein sequence, read N- to C-terminus: Trans-aconitate 2-methyltransferase (253 aa).

This sequence belongs to the methyltransferase superfamily. Tam family.

It is found in the cytoplasm. The catalysed reaction is trans-aconitate + S-adenosyl-L-methionine = (E)-3-(methoxycarbonyl)pent-2-enedioate + S-adenosyl-L-homocysteine. Its function is as follows. Catalyzes the S-adenosylmethionine monomethyl esterification of trans-aconitate. The chain is Trans-aconitate 2-methyltransferase from Klebsiella pneumoniae (strain 342).